Consider the following 489-residue polypeptide: Anthranilate synthase component 1 1 (489 aa).

Residue 262–264 (PYS) participates in L-tryptophan binding. The interval 288–309 (DRIETEPIAGTRPRGETPDADD) is disordered. 297–298 (GT) serves as a coordination point for chorismate. A compositionally biased stretch (basic and acidic residues) spans 300–309 (PRGETPDADD). Glutamate 324 contributes to the Mg(2+) binding site. Residues tyrosine 412, arginine 432, 446-448 (GAG), and glycine 448 contribute to the chorismate site. Glutamate 461 is a binding site for Mg(2+).

The protein belongs to the anthranilate synthase component I family. In terms of assembly, tetramer of two components I and two components II. It depends on Mg(2+) as a cofactor.

It carries out the reaction chorismate + L-glutamine = anthranilate + pyruvate + L-glutamate + H(+). It participates in amino-acid biosynthesis; L-tryptophan biosynthesis; L-tryptophan from chorismate: step 1/5. This chain is Anthranilate synthase component 1 1 (trpE1), found in Haloarcula marismortui (strain ATCC 43049 / DSM 3752 / JCM 8966 / VKM B-1809) (Halobacterium marismortui).